The primary structure comprises 539 residues: Chaperonin GroEL 1 (539 aa).

Residues 29 to 32 (TLGP), 86 to 90 (DGTTT), G413, 478 to 480 (NAA), and D494 contribute to the ATP site. The disordered stretch occupies residues 520-539 (IVDKPAEPEDDGHGHHGHAH). The segment covering 523-533 (KPAEPEDDGHG) has biased composition (basic and acidic residues).

The protein belongs to the chaperonin (HSP60) family. Forms a cylinder of 14 subunits composed of two heptameric rings stacked back-to-back. Interacts with the co-chaperonin GroES.

The protein resides in the cytoplasm. The enzyme catalyses ATP + H2O + a folded polypeptide = ADP + phosphate + an unfolded polypeptide.. Functionally, together with its co-chaperonin GroES, plays an essential role in assisting protein folding. The GroEL-GroES system forms a nano-cage that allows encapsulation of the non-native substrate proteins and provides a physical environment optimized to promote and accelerate protein folding. This is Chaperonin GroEL 1 from Mycobacterium ulcerans (strain Agy99).